Consider the following 106-residue polypeptide: Integration host factor subunit beta (106 aa).

Residues 57–106 (PARAGRNPRTGEHVPVEQKSVPFFKTGKEMRERLNRDGLDGATPPSPPAA) form a disordered region. The span at 82–95 (TGKEMRERLNRDGL) shows a compositional bias: basic and acidic residues.

Belongs to the bacterial histone-like protein family. As to quaternary structure, heterodimer of an alpha and a beta chain.

In terms of biological role, this protein is one of the two subunits of integration host factor, a specific DNA-binding protein that functions in genetic recombination as well as in transcriptional and translational control. The chain is Integration host factor subunit beta from Afipia carboxidovorans (strain ATCC 49405 / DSM 1227 / KCTC 32145 / OM5) (Oligotropha carboxidovorans).